Consider the following 426-residue polypeptide: Serine hydroxymethyltransferase 1 (426 aa).

(6S)-5,6,7,8-tetrahydrofolate is bound by residues Leu-118 and 122 to 124 (GHL). Residue Lys-227 is modified to N6-(pyridoxal phosphate)lysine.

It belongs to the SHMT family. As to quaternary structure, homodimer. Requires pyridoxal 5'-phosphate as cofactor.

The protein resides in the cytoplasm. The catalysed reaction is (6R)-5,10-methylene-5,6,7,8-tetrahydrofolate + glycine + H2O = (6S)-5,6,7,8-tetrahydrofolate + L-serine. Its pathway is one-carbon metabolism; tetrahydrofolate interconversion. The protein operates within amino-acid biosynthesis; glycine biosynthesis; glycine from L-serine: step 1/1. In terms of biological role, catalyzes the reversible interconversion of serine and glycine with tetrahydrofolate (THF) serving as the one-carbon carrier. This reaction serves as the major source of one-carbon groups required for the biosynthesis of purines, thymidylate, methionine, and other important biomolecules. Also exhibits THF-independent aldolase activity toward beta-hydroxyamino acids, producing glycine and aldehydes, via a retro-aldol mechanism. This Mycobacterium bovis (strain ATCC BAA-935 / AF2122/97) protein is Serine hydroxymethyltransferase 1.